A 393-amino-acid polypeptide reads, in one-letter code: Tryptophan synthase beta chain (393 aa).

Lys85 carries the N6-(pyridoxal phosphate)lysine modification.

This sequence belongs to the TrpB family. Tetramer of two alpha and two beta chains. Pyridoxal 5'-phosphate is required as a cofactor.

It carries out the reaction (1S,2R)-1-C-(indol-3-yl)glycerol 3-phosphate + L-serine = D-glyceraldehyde 3-phosphate + L-tryptophan + H2O. Its pathway is amino-acid biosynthesis; L-tryptophan biosynthesis; L-tryptophan from chorismate: step 5/5. The beta subunit is responsible for the synthesis of L-tryptophan from indole and L-serine. This chain is Tryptophan synthase beta chain (trpB), found in Helicobacter pylori (strain J99 / ATCC 700824) (Campylobacter pylori J99).